A 20-amino-acid polypeptide reads, in one-letter code: APSDTTIAETLTITEEFFPD.

Positions 1-20 are disordered; it reads APSDTTIAETLTITEEFFPD.

As to expression, hemolymph.

The protein localises to the secreted. It is found in the extracellular space. In terms of biological role, inhibits trypsin stoichiometrically. Also inhibits chymotrypsin very weakly. This Mythimna unipuncta (Armyworm moth) protein is Trypsin inhibitor.